A 351-amino-acid polypeptide reads, in one-letter code: V-type proton ATPase subunit d1 (351 aa).

This sequence belongs to the V-ATPase V0D/AC39 subunit family. V-ATPase is a heteromultimeric enzyme composed of a peripheral catalytic V1 complex (components A to H) attached to an integral membrane V0 proton pore complex (components: a, c, c'', d and e).

Its subcellular location is the vacuole membrane. Its function is as follows. Subunit of the integral membrane V0 complex of vacuolar ATPase. Vacuolar ATPase is responsible for acidifying a variety of intracellular compartments in eukaryotic cells, thus providing most of the energy required for transport processes in the vacuolar system. The protein is V-type proton ATPase subunit d1 (VHA-d1) of Arabidopsis thaliana (Mouse-ear cress).